The primary structure comprises 298 residues: Tyrosine recombinase XerC (298 aa).

The Core-binding (CB) domain occupies 2 to 88 (TDLHTDVERY…ALRSFFDWLV (87 aa)). The Tyr recombinase domain maps to 109–288 (HLPKNIDVDD…DFQHLASVYD (180 aa)). Catalysis depends on residues Arg-148, Lys-172, His-240, Arg-243, and His-266. Tyr-275 functions as the O-(3'-phospho-DNA)-tyrosine intermediate in the catalytic mechanism.

This sequence belongs to the 'phage' integrase family. XerC subfamily. As to quaternary structure, forms a cyclic heterotetrameric complex composed of two molecules of XerC and two molecules of XerD, in which XerC interacts with XerD via its C-terminal region, XerD interacts with XerC via its C-terminal region and so on.

Its subcellular location is the cytoplasm. Its activity is regulated as follows. FtsK may regulate the catalytic switch between XerC and XerD in the heterotetrameric complex during the two steps of the recombination process. In terms of biological role, site-specific tyrosine recombinase, which acts by catalyzing the cutting and rejoining of the recombining DNA molecules. Binds cooperatively to specific DNA consensus sequences that are separated from XerD binding sites by a short central region, forming the heterotetrameric XerC-XerD complex that recombines DNA substrates. The complex is essential to convert dimers of the bacterial chromosome into monomers to permit their segregation at cell division. It also contributes to the segregational stability of plasmids. In the complex XerC specifically exchanges the top DNA strands. The chain is Tyrosine recombinase XerC from Shigella flexneri serotype 5b (strain 8401).